Consider the following 237-residue polypeptide: Pyridoxine 5'-phosphate synthase (237 aa).

3-amino-2-oxopropyl phosphate-binding residues include asparagine 7 and arginine 18. Histidine 43 acts as the Proton acceptor in catalysis. Residues arginine 45 and histidine 50 each contribute to the 1-deoxy-D-xylulose 5-phosphate site. Glutamate 70 functions as the Proton acceptor in the catalytic mechanism. A 1-deoxy-D-xylulose 5-phosphate-binding site is contributed by threonine 100. Histidine 190 (proton donor) is an active-site residue. 3-amino-2-oxopropyl phosphate is bound by residues aspartate 191 and glycine 213–histidine 214.

It belongs to the PNP synthase family. As to quaternary structure, homooctamer; tetramer of dimers.

It is found in the cytoplasm. It carries out the reaction 3-amino-2-oxopropyl phosphate + 1-deoxy-D-xylulose 5-phosphate = pyridoxine 5'-phosphate + phosphate + 2 H2O + H(+). It functions in the pathway cofactor biosynthesis; pyridoxine 5'-phosphate biosynthesis; pyridoxine 5'-phosphate from D-erythrose 4-phosphate: step 5/5. Functionally, catalyzes the complicated ring closure reaction between the two acyclic compounds 1-deoxy-D-xylulose-5-phosphate (DXP) and 3-amino-2-oxopropyl phosphate (1-amino-acetone-3-phosphate or AAP) to form pyridoxine 5'-phosphate (PNP) and inorganic phosphate. This Flavobacterium johnsoniae (strain ATCC 17061 / DSM 2064 / JCM 8514 / BCRC 14874 / CCUG 350202 / NBRC 14942 / NCIMB 11054 / UW101) (Cytophaga johnsonae) protein is Pyridoxine 5'-phosphate synthase.